The following is a 235-amino-acid chain: Exotoxin type C (235 aa).

A signal peptide spans 1-27 (MKKINIIKIVFIITVILISTISPIIKS). Positions 194, 228, and 230 each coordinate Zn(2+).

The protein belongs to the staphylococcal/streptococcal toxin family.

In terms of biological role, superantigen that acts as a causative agent of the symptoms associated with scarlet fever. Has been associated with streptococcal toxic shock-like disease and may play a role in the early events of rheumatic fever. Superantigens cross-link major histocompatibility complex (MHC) class II and T-cell receptor (TCR) molecules, resulting in an overstimulation of T-cells associated with a massive release of pyrogenic and inflammatory cytokines. This Streptococcus pyogenes serotype M1 protein is Exotoxin type C (speC).